The primary structure comprises 160 residues: Ribosomal RNA large subunit methyltransferase H (160 aa).

G108 serves as a coordination point for S-adenosyl-L-methionine.

Belongs to the RNA methyltransferase RlmH family. In terms of assembly, homodimer.

Its subcellular location is the cytoplasm. The catalysed reaction is pseudouridine(1915) in 23S rRNA + S-adenosyl-L-methionine = N(3)-methylpseudouridine(1915) in 23S rRNA + S-adenosyl-L-homocysteine + H(+). In terms of biological role, specifically methylates the pseudouridine at position 1915 (m3Psi1915) in 23S rRNA. The chain is Ribosomal RNA large subunit methyltransferase H from Rhodopseudomonas palustris (strain BisA53).